We begin with the raw amino-acid sequence, 267 residues long: Thiamine pyrophosphokinase 3 (267 aa).

Belongs to the thiamine pyrophosphokinase family.

The protein resides in the cytoplasm. It localises to the cytosol. It catalyses the reaction thiamine + ATP = thiamine diphosphate + AMP + H(+). Its pathway is cofactor biosynthesis; thiamine diphosphate biosynthesis; thiamine diphosphate from thiamine: step 1/1. Its function is as follows. Catalyzes the phosphorylation of thiamine to thiamine pyrophosphate (TPP). TPP is an active cofactor for enzymes involved in glycolysis and energy production. Plant leaves require high levels of TPP for photosynthesis and carbohydrate metabolism. This Oryza sativa subsp. japonica (Rice) protein is Thiamine pyrophosphokinase 3 (TPK3).